Consider the following 94-residue polypeptide: Integration host factor subunit beta (94 aa).

Belongs to the bacterial histone-like protein family. Heterodimer of an alpha and a beta chain.

Functionally, this protein is one of the two subunits of integration host factor, a specific DNA-binding protein that functions in genetic recombination as well as in transcriptional and translational control. The polypeptide is Integration host factor subunit beta (Vibrio campbellii (strain ATCC BAA-1116)).